A 588-amino-acid chain; its full sequence is Adenine deaminase (588 aa).

This sequence belongs to the metallo-dependent hydrolases superfamily. Adenine deaminase family. In terms of assembly, homodimer. Requires Mn(2+) as cofactor.

The catalysed reaction is adenine + H2O + H(+) = hypoxanthine + NH4(+). In Shigella boydii serotype 4 (strain Sb227), this protein is Adenine deaminase.